The primary structure comprises 651 residues: Translation initiation factor eIF2B subunit delta (651 aa).

Residues 1–108 (MSESEAKSRS…NERNVKKSTL (108 aa)) form a disordered region. Ser-2 is modified (N-acetylserine). Residues 11-28 (ATPPSKAKQATPTTTAAA) show a composition bias toward low complexity. 2 stretches are compositionally biased toward basic and acidic residues: residues 30–49 (GEKK…EKAA) and 76–90 (KQLQ…EQKQ). Ser-106 carries the post-translational modification Phosphoserine. Position 121 is a phosphothreonine (Thr-121). The tract at residues 566–600 (AMENKPKGNKIGGKKGSEGESKDASNEEDSNSKNI) is disordered. Positions 580-590 (KGSEGESKDAS) are enriched in basic and acidic residues.

Belongs to the eIF-2B alpha/beta/delta subunits family. Component of the translation initiation factor 2B (eIF2B) complex which is a heterodecamer of two sets of five different subunits: alpha, beta, gamma, delta and epsilon. Subunits alpha, beta and delta comprise a regulatory subcomplex and subunits epsilon and gamma comprise a catalytic subcomplex. Within the complex, the hexameric regulatory complex resides at the center, with the two heterodimeric catalytic subcomplexes bound on opposite sides.

The protein resides in the cytoplasm. It is found in the cytosol. Acts as a component of the translation initiation factor 2B (eIF2B) complex, which catalyzes the exchange of GDP for GTP on the eukaryotic initiation factor 2 (eIF2) complex gamma subunit. Its guanine nucleotide exchange factor activity is repressed when bound to eIF2 complex phosphorylated on the alpha subunit, thereby limiting the amount of methionyl-initiator methionine tRNA available to the ribosome and consequently global translation is repressed. It activates the synthesis of GCN4 in yeast under amino acid starvation conditions by suppressing the inhibitory effects of multiple AUG codons present in the leader of GCN4 mRNA. It may promote either repression or activation of GCN4 expression depending on amino acid availability. GCD2 is also required for cell viability. Its function can partially be replaced by GCN3 under normal growth conditions in GCD2-defective mutants, under AA starvation conditions GCN3 is an antagonist (GCN4 translational activator). This chain is Translation initiation factor eIF2B subunit delta (GCD2), found in Saccharomyces cerevisiae (strain ATCC 204508 / S288c) (Baker's yeast).